The following is a 367-amino-acid chain: Probable butyrate kinase (367 aa).

This sequence belongs to the acetokinase family.

The protein resides in the cytoplasm. It catalyses the reaction butanoate + ATP = butanoyl phosphate + ADP. In Bacillus cereus (strain G9842), this protein is Probable butyrate kinase.